Reading from the N-terminus, the 1264-residue chain is uncharacterized protein (1264 aa).

Residues 1–18 (MMRKYLILLILLPALAVG) form the signal peptide. A helical membrane pass occupies residues 1215-1235 (SYTVLGVVVITILTMSIILCL).

It localises to the host membrane. This is an uncharacterized protein from Ostreid herpesvirus 1 (isolate France) (OsHV-1).